Reading from the N-terminus, the 70-residue chain is Turripeptide Gsp9.3 (70 aa).

The N-terminal stretch at 1 to 20 (MKVYCLLLVLLVGLVSQAHG) is a signal peptide. In terms of domain architecture, Kazal-like spans 21-70 (QLDKKCQMVCTFDYRPVCGSDGRTYPNKCTLTSTACMSQRSITVFHDGEC). Cystine bridges form between Cys-26/Cys-56, Cys-30/Cys-49, and Cys-38/Cys-70.

This sequence belongs to the conopeptide P-like superfamily. In terms of tissue distribution, expressed by the venom duct.

The protein localises to the secreted. Its function is as follows. Acts as a neurotoxin by inhibiting an ion channel. May also act as a serine protease inhibitor, since it possess the kazal serine protease inhibitor signature. The polypeptide is Turripeptide Gsp9.3 (Gemmula speciosa (Splendid gem-turris)).